Reading from the N-terminus, the 174-residue chain is Shikimate kinase (174 aa).

14–19 provides a ligand contact to ATP; it reads GAGKST. Position 18 (S18) interacts with Mg(2+). The substrate site is built by D36, R60, and G82. R120 provides a ligand contact to ATP. R141 contacts substrate. R158 provides a ligand contact to ATP.

This sequence belongs to the shikimate kinase family. In terms of assembly, monomer. Mg(2+) serves as cofactor.

The protein resides in the cytoplasm. The enzyme catalyses shikimate + ATP = 3-phosphoshikimate + ADP + H(+). Its pathway is metabolic intermediate biosynthesis; chorismate biosynthesis; chorismate from D-erythrose 4-phosphate and phosphoenolpyruvate: step 5/7. Functionally, catalyzes the specific phosphorylation of the 3-hydroxyl group of shikimic acid using ATP as a cosubstrate. This chain is Shikimate kinase, found in Buchnera aphidicola subsp. Baizongia pistaciae (strain Bp).